Consider the following 335-residue polypeptide: MTVTPSAATTDGPAAPCAPEDVRRVACVGTGVIGGGWAAHFLARGYDVTAWDPAPDAAVRLRRLIAAAWPALEQLGLAEGASQDRLTVTSTLEEAVADAQFVQESAPEKLDLKRDLLARLDAATPAGTVIASSTSGYPMTDMQTEAADPGRLVVGHPFNPPYLIPLVEVVGGVRTAPAAVDWAARFYAVAGKSVITMEREVPGFIANRLQEALWREALHMVANGEATVAEIDASITEGPGLRWAVMGPMLTFALAGGEGGMAHMLDHFGPSLTSPWTRLEAPELDRALYDAVVAGCEEAADGRSIADLVAERDRGVIDVLRATGRLPRSAEEAAR.

Residue 29–34 (GTGVIG) coordinates NAD(+).

Belongs to the 3-hydroxyacyl-CoA dehydrogenase family. L-carnitine dehydrogenase subfamily. Homodimer.

It localises to the cytoplasm. The enzyme catalyses carnitine + NAD(+) = 3-dehydrocarnitine + NADH + H(+). It functions in the pathway amine and polyamine metabolism; carnitine metabolism. Catalyzes the NAD(+)-dependent oxidation of L-carnitine to 3-dehydrocarnitine. This Streptomyces griseus subsp. griseus (strain JCM 4626 / CBS 651.72 / NBRC 13350 / KCC S-0626 / ISP 5235) protein is L-carnitine dehydrogenase.